A 274-amino-acid polypeptide reads, in one-letter code: Large ribosomal subunit protein uL2 (274 aa).

The segment at 223-257 (VAMNPVDHPHGGGEGRTSGGRHPVTPWGIPTKGYK) is disordered.

The protein belongs to the universal ribosomal protein uL2 family. In terms of assembly, part of the 50S ribosomal subunit. Forms a bridge to the 30S subunit in the 70S ribosome.

In terms of biological role, one of the primary rRNA binding proteins. Required for association of the 30S and 50S subunits to form the 70S ribosome, for tRNA binding and peptide bond formation. It has been suggested to have peptidyltransferase activity; this is somewhat controversial. Makes several contacts with the 16S rRNA in the 70S ribosome. This chain is Large ribosomal subunit protein uL2, found in Geobacter sulfurreducens (strain ATCC 51573 / DSM 12127 / PCA).